The primary structure comprises 473 residues: MQPFIHENFLLQNKHAEVLYHDYAKSLPIIDYHCHLSAKEIAEDRRFHDMTELWLEGDHYKWRAMRALGVEEKYITGNASPEEKFQAWAKTVPYCIGNPLYHWTHLELKRYFQVDALLNERTWREIWNHCNDLLRQEGFSARSFMVKSNVEWIGTTDDPLDDLADHQAIAQDPSFLVKIVPSFRPDAVIEINRPSFLDYVGKLGEALACRFMITISCCKPLENRVRYFHEKGCRMADHGLESMPYSECGWKEANDIFQKRKNGFVLSREEEEKYKTSTLCFLARLYHSLGWVMQLHIGSIRNTNEKMFRRLGPNTGYDSIHDFFLAQPLNAFLNELERRDQLPKTIVYTLNPAYNYVVASTVGNFQSEGVKGKVPIWRSLGGFNDSFKMAFIRHLTDLANVGVFSTFVGMLTDSRSFVSYVRHEYFRRIVCNLIGSWIEKGEVPQDYDFLGKIVQDVCYFNAKQYFQVGVSGG.

The protein belongs to the metallo-dependent hydrolases superfamily. Uronate isomerase family.

The enzyme catalyses D-glucuronate = D-fructuronate. The catalysed reaction is aldehydo-D-galacturonate = keto-D-tagaturonate. The protein operates within carbohydrate metabolism; pentose and glucuronate interconversion. The sequence is that of Uronate isomerase (uxaC) from Geobacillus stearothermophilus (Bacillus stearothermophilus).